Reading from the N-terminus, the 151-residue chain is tRNA-specific adenosine deaminase (151 aa).

The 111-residue stretch at 1–111 folds into the CMP/dCMP-type deaminase domain; that stretch reads MGKEYFLKVA…LDKKHGGVVS (111 aa). H52 contacts Zn(2+). E54 (proton donor) is an active-site residue. The Zn(2+) site is built by C82 and C85.

Belongs to the cytidine and deoxycytidylate deaminase family. As to quaternary structure, homodimer. Zn(2+) serves as cofactor.

It carries out the reaction adenosine(34) in tRNA + H2O + H(+) = inosine(34) in tRNA + NH4(+). Catalyzes the deamination of adenosine to inosine at the wobble position 34 of tRNA(Arg2). The sequence is that of tRNA-specific adenosine deaminase from Aquifex aeolicus (strain VF5).